The chain runs to 104 residues: Large ribosomal subunit protein uL23 (104 aa).

Belongs to the universal ribosomal protein uL23 family. As to quaternary structure, part of the 50S ribosomal subunit. Contacts protein L29, and trigger factor when it is bound to the ribosome.

In terms of biological role, one of the early assembly proteins it binds 23S rRNA. One of the proteins that surrounds the polypeptide exit tunnel on the outside of the ribosome. Forms the main docking site for trigger factor binding to the ribosome. This Nostoc punctiforme (strain ATCC 29133 / PCC 73102) protein is Large ribosomal subunit protein uL23.